The sequence spans 198 residues: Recombination protein RecR (198 aa).

The C4-type zinc-finger motif lies at 57–72 (CSVCGHITENDPCYIC). Residues 80–175 (SVICVVEDDK…KVTRLAQGLS (96 aa)) enclose the Toprim domain.

The protein belongs to the RecR family.

Its function is as follows. May play a role in DNA repair. It seems to be involved in an RecBC-independent recombinational process of DNA repair. It may act with RecF and RecO. The chain is Recombination protein RecR from Staphylococcus aureus (strain JH1).